Consider the following 330-residue polypeptide: Ketol-acid reductoisomerase (NADP(+)) (330 aa).

The region spanning 2–182 (IHVYYDKDAN…GCTKAGVIET (181 aa)) is the KARI N-terminal Rossmann domain. NADP(+) contacts are provided by residues 25 to 28 (YGSQ), Arg-48, Ser-51, Ser-53, and 83 to 86 (DEVQ). His-108 is a catalytic residue. Residue Gly-134 participates in NADP(+) binding. Residues 183–328 (TFKEETETDL…KKLRDMMPWI (146 aa)) form the KARI C-terminal knotted domain. Asp-191, Glu-195, Glu-227, and Glu-231 together coordinate Mg(2+). Ser-252 is a binding site for substrate.

This sequence belongs to the ketol-acid reductoisomerase family. It depends on Mg(2+) as a cofactor.

It catalyses the reaction (2R)-2,3-dihydroxy-3-methylbutanoate + NADP(+) = (2S)-2-acetolactate + NADPH + H(+). The enzyme catalyses (2R,3R)-2,3-dihydroxy-3-methylpentanoate + NADP(+) = (S)-2-ethyl-2-hydroxy-3-oxobutanoate + NADPH + H(+). It functions in the pathway amino-acid biosynthesis; L-isoleucine biosynthesis; L-isoleucine from 2-oxobutanoate: step 2/4. The protein operates within amino-acid biosynthesis; L-valine biosynthesis; L-valine from pyruvate: step 2/4. Involved in the biosynthesis of branched-chain amino acids (BCAA). Catalyzes an alkyl-migration followed by a ketol-acid reduction of (S)-2-acetolactate (S2AL) to yield (R)-2,3-dihydroxy-isovalerate. In the isomerase reaction, S2AL is rearranged via a Mg-dependent methyl migration to produce 3-hydroxy-3-methyl-2-ketobutyrate (HMKB). In the reductase reaction, this 2-ketoacid undergoes a metal-dependent reduction by NADPH to yield (R)-2,3-dihydroxy-isovalerate. The polypeptide is Ketol-acid reductoisomerase (NADP(+)) (Halothermothrix orenii (strain H 168 / OCM 544 / DSM 9562)).